The primary structure comprises 143 residues: Putative aryl-alcohol dehydrogenase AAD15 (143 aa).

Belongs to the aldo/keto reductase family. Aldo/keto reductase 2 subfamily.

Its function is as follows. Putative aryl-alcohol dehydrogenase. The protein is Putative aryl-alcohol dehydrogenase AAD15 (AAD15) of Saccharomyces cerevisiae (strain ATCC 204508 / S288c) (Baker's yeast).